Reading from the N-terminus, the 204-residue chain is N-(5'-phosphoribosyl)anthranilate isomerase (204 aa).

The protein belongs to the TrpF family.

It catalyses the reaction N-(5-phospho-beta-D-ribosyl)anthranilate = 1-(2-carboxyphenylamino)-1-deoxy-D-ribulose 5-phosphate. It participates in amino-acid biosynthesis; L-tryptophan biosynthesis; L-tryptophan from chorismate: step 3/5. The polypeptide is N-(5'-phosphoribosyl)anthranilate isomerase (Pseudomonas fluorescens (strain Pf0-1)).